Reading from the N-terminus, the 135-residue chain is Protein Wnt-7a (135 aa).

Cystine bridges form between Cys3/Cys17 and Cys5/Cys12. Residue Ser9 is the site of O-palmitoleoyl serine; by PORCN attachment. The interval 41–69 (VEPVRASRNKRPTFLKIKKPLSYRKPMDT) is disordered linker. Intrachain disulfides connect Cys81-Cys112, Cys97-Cys107, Cys111-Cys134, and Cys130-Cys131. The N-linked (GlcNAc...) asparagine glycan is linked to Asn98.

This sequence belongs to the Wnt family. In terms of processing, palmitoleoylation is required for efficient binding to frizzled receptors. Depalmitoleoylation leads to Wnt signaling pathway inhibition. As to expression, in embryo, in brain and ventral neural tube; in adults, in brain.

The protein resides in the secreted. Its subcellular location is the extracellular space. The protein localises to the extracellular matrix. Functionally, ligand for members of the frizzled family of seven transmembrane receptors that functions in the canonical Wnt/beta-catenin signaling pathway. Plays an important role in embryonic development, including dorsal versus ventral patterning during limb development, skeleton development and urogenital tract development. Required for central nervous system (CNS) angiogenesis and blood-brain barrier regulation. This Xenopus laevis (African clawed frog) protein is Protein Wnt-7a (wnt7a).